Here is a 715-residue protein sequence, read N- to C-terminus: ATP-dependent DNA helicase Hel308 (715 aa).

A Q motif motif is present at residues 1–29; it reads MKVGELNVSEKIKEILRERGIEELYPPQA. ATP-binding positions include Gln-28 and 46 to 53; that span reads IPTASGKT. In terms of domain architecture, Helicase ATP-binding spans 33-197; it reads TSGVLEGENL…WLNAKLIRSD (165 aa). The DEAH box signature appears at 145–148; the sequence is DEIH. The Helicase C-terminal domain maps to 226 to 422; sequence WEELVYDAVK…ILRSQILALI (197 aa).

The protein belongs to the helicase family. Hel308 subfamily. As to quaternary structure, monomer.

It carries out the reaction Couples ATP hydrolysis with the unwinding of duplex DNA by translocating in the 3'-5' direction.. The catalysed reaction is ATP + H2O = ADP + phosphate + H(+). DNA-dependent ATPase and 3'-5' DNA helicase that may be involved in repair of stalled replication forks. Functionally, rapidly unwinds double-stranded (ds)DNA with a 3'-overhang, has no strand reannealing capabilities. Binds single-stranded (ss)DNA, dsDNA with a 3'-overhang and ssRNA. In Pyrococcus abyssi (strain GE5 / Orsay), this protein is ATP-dependent DNA helicase Hel308.